A 487-amino-acid chain; its full sequence is Betaine aldehyde dehydrogenase (487 aa).

2 residues coordinate K(+): serine 26 and aspartate 93. 150–152 (GAW) serves as a coordination point for NAD(+). The active-site Charge relay system is the lysine 162. NAD(+) contacts are provided by residues 176–179 (KPSE) and 229–232 (SVPT). A K(+)-binding site is contributed by leucine 244. The active-site Proton acceptor is glutamate 250. The NAD(+) site is built by glycine 252, cysteine 284, and glutamate 384. Cysteine 284 functions as the Nucleophile in the catalytic mechanism. Position 284 is a cysteine sulfenic acid (-SOH) (cysteine 284). K(+) contacts are provided by lysine 454 and glycine 457. Glutamate 461 serves as the catalytic Charge relay system.

This sequence belongs to the aldehyde dehydrogenase family. In terms of assembly, dimer of dimers. K(+) is required as a cofactor.

It catalyses the reaction betaine aldehyde + NAD(+) + H2O = glycine betaine + NADH + 2 H(+). It functions in the pathway amine and polyamine biosynthesis; betaine biosynthesis via choline pathway; betaine from betaine aldehyde: step 1/1. In terms of biological role, involved in the biosynthesis of the osmoprotectant glycine betaine. Catalyzes the irreversible oxidation of betaine aldehyde to the corresponding acid. The protein is Betaine aldehyde dehydrogenase of Rhizobium etli (strain ATCC 51251 / DSM 11541 / JCM 21823 / NBRC 15573 / CFN 42).